Reading from the N-terminus, the 295-residue chain is Hepatic leukemia factor (295 aa).

Residues 37–52 show a composition bias toward basic and acidic residues; that stretch reads EDAFSKDKDKEKKLDD. 2 disordered regions span residues 37–70 and 93–167; these read EDAF…PTLW and SENG…IDPD. The 64-residue stretch at 225-288 folds into the bZIP domain; the sequence is DDKYWARRRK…GKCKNILAKY (64 aa). The segment at 227-247 is basic motif; sequence KYWARRRKNNMAAKRSRDARR. The leucine-zipper stretch occupies residues 248 to 255; it reads LKENQIAI.

Belongs to the bZIP family. PAR subfamily. As to quaternary structure, binds DNA specifically as homodimer or heterodimer with other PAR factors. As to expression, highly expressed in liver; lower levels in lung and kidney.

Its subcellular location is the nucleus. The protein is Hepatic leukemia factor (HLF) of Homo sapiens (Human).